The chain runs to 260 residues: Probable 6-oxopurine nucleoside phosphorylase (260 aa).

Phosphate is bound by residues Ser-9 and 49–50 (RH). A substrate-binding site is contributed by Met-182. Residue Thr-183 participates in phosphate binding. 206–208 (NMA) is a binding site for substrate.

Belongs to the PNP/MTAP phosphorylase family. MTAP subfamily. Homohexamer. Dimer of a homotrimer.

The catalysed reaction is a purine D-ribonucleoside + phosphate = a purine nucleobase + alpha-D-ribose 1-phosphate. Its pathway is purine metabolism; purine nucleoside salvage. Purine nucleoside phosphorylase which is highly specific for 6-oxopurine nucleosides. Cleaves guanosine or inosine to respective bases and sugar-1-phosphate molecules. Involved in purine salvage. This is Probable 6-oxopurine nucleoside phosphorylase from Moorella thermoacetica (strain ATCC 39073 / JCM 9320).